Consider the following 647-residue polypeptide: Protein cueball (647 aa).

The signal sequence occupies residues 1 to 22; the sequence is MLWCPSVLVPLIAVAACLPVLA. Residues 23-534 are Extracellular-facing; it reads IGTPLEWEFA…CMTPSPWTSN (512 aa). 2 N-linked (GlcNAc...) asparagine glycosylation sites follow: Asn80 and Asn106. 3 LDL-receptor class B repeats span residues 119–166, 167–211, and 212–257; these read RNLF…DVCR, RKLY…DQLS, and DRIF…TNDA. Asn175 is a glycosylation site (N-linked (GlcNAc...) asparagine). The N-linked (GlcNAc...) asparagine glycan is linked to Asn316. 2 consecutive EGF-like domains span residues 365–401 and 436–473; these read DEKT…SRCE and EISK…ERCE. 5 disulfides stabilise this stretch: Cys376/Cys389, Cys391/Cys400, Cys440/Cys450, Cys444/Cys461, and Cys463/Cys472. The N-linked (GlcNAc...) asparagine glycan is linked to Asn475. Residues 535–555 traverse the membrane as a helical segment; it reads VIIVLVLGIVSCFFLVAVIVH. Residues 556 to 647 lie on the Cytoplasmic side of the membrane; that stretch reads GFRRLYKPKR…LIHNMDDDLY (92 aa).

This sequence belongs to the cueball family.

Its subcellular location is the cell membrane. Functionally, has a role in spermatogenesis and oogenesis. The polypeptide is Protein cueball (Drosophila persimilis (Fruit fly)).